The following is a 345-amino-acid chain: MSIIKNDTIIKAYQGEETDYTPAWFMRQAGRSQPEYRALKEKYSLFEITHQPELCAYVTRLPVENYGTDAAILYKDIMSPLPYIGVDVEIKSGIGPVIHNPIRNLQDVEKLGVINPVSDVPYVLDTIRLLTEEQLEVPLIGFSGAPFTLASYMIEGGPSKNYSKTKALMYREPETWFALMDKLSDMIISYVDAQVEAGAKAIQIFDSWVGSLNAEDYRVFIKPVMTRIFSELRRHEVPLITFGVGARHLLMEWNDLPVDVIGLDWRTSINEAREMGVTKVVQGNLDPAILLSDWQTIEQRTKQILDQGMQSGKHVFNLGHGVTPDIEPATLKKLTELVHNYSKQK.

Substrate contacts are provided by residues arginine 27–arginine 31, phenylalanine 46, aspartate 76, tyrosine 152, serine 207, and histidine 320.

The protein belongs to the uroporphyrinogen decarboxylase family. Homodimer.

It is found in the cytoplasm. The enzyme catalyses uroporphyrinogen III + 4 H(+) = coproporphyrinogen III + 4 CO2. It participates in porphyrin-containing compound metabolism; protoporphyrin-IX biosynthesis; coproporphyrinogen-III from 5-aminolevulinate: step 4/4. Functionally, catalyzes the decarboxylation of four acetate groups of uroporphyrinogen-III to yield coproporphyrinogen-III. The chain is Uroporphyrinogen decarboxylase from Oceanobacillus iheyensis (strain DSM 14371 / CIP 107618 / JCM 11309 / KCTC 3954 / HTE831).